The primary structure comprises 107 residues: Nucleoid-associated protein Rru_A3472 (107 aa).

Belongs to the YbaB/EbfC family. In terms of assembly, homodimer.

The protein resides in the cytoplasm. The protein localises to the nucleoid. Functionally, binds to DNA and alters its conformation. May be involved in regulation of gene expression, nucleoid organization and DNA protection. The protein is Nucleoid-associated protein Rru_A3472 of Rhodospirillum rubrum (strain ATCC 11170 / ATH 1.1.1 / DSM 467 / LMG 4362 / NCIMB 8255 / S1).